Consider the following 86-residue polypeptide: MKPGIHPEYRKVVFHDTSVDHYFVVGSTLQTDRTIEWEDGQTYPYFTIEVSSESHPFYTGKQRVVQKEGRVANFNRRFAQFGSREG.

Belongs to the bacterial ribosomal protein bL31 family. Type B subfamily. In terms of assembly, part of the 50S ribosomal subunit.

In Vibrio vulnificus (strain CMCP6), this protein is Large ribosomal subunit protein bL31B.